The chain runs to 146 residues: Phospholipase A2 (146 aa).

A signal peptide spans 1-18 (MAFLVFAFLTLMAVETYG). Intrachain disulfides connect Cys44/Cys137, Cys46/Cys62, Cys61/Cys117, Cys67/Cys144, Cys68/Cys110, Cys77/Cys103, and Cys95/Cys108. 3 residues coordinate Ca(2+): Tyr45, Gly47, and Gly49. The active site involves His65. Asp66 is a binding site for Ca(2+). The N-linked (GlcNAc...) asparagine glycan is linked to Asn85. Asp111 is a catalytic residue. Asn126 carries an N-linked (GlcNAc...) asparagine glycan.

The cofactor is Ca(2+). Post-translationally, N-glycosylated. Glycosylated with mannose chains including Man2(GlcNAc), Man2(GlcNAc)2, Man2(GlcNAc)3, Man2(GlcNAc)4 and Man2(GlcNAc)5. Expressed by the skin glands (at protein level).

Its subcellular location is the secreted. It catalyses the reaction a 1,2-diacyl-sn-glycero-3-phosphocholine + H2O = a 1-acyl-sn-glycero-3-phosphocholine + a fatty acid + H(+). PLA2 catalyzes the calcium-dependent hydrolysis of the 2-acyl groups in 3-sn-phosphoglycerides. This Pithecopus azureus (Orange-legged monkey tree frog) protein is Phospholipase A2.